We begin with the raw amino-acid sequence, 335 residues long: Malate dehydrogenase 1 (335 aa).

NAD(+) is bound by residues 11–16 and aspartate 35; that span reads GAGNVG. Positions 97 and 103 each coordinate substrate. NAD(+)-binding positions include asparagine 110 and 133–135; that span reads VTN. Residues asparagine 135 and arginine 166 each contribute to the substrate site. The Proton acceptor role is filled by histidine 190.

Belongs to the LDH/MDH superfamily. MDH type 3 family.

It catalyses the reaction (S)-malate + NAD(+) = oxaloacetate + NADH + H(+). Its function is as follows. Catalyzes the reversible oxidation of malate to oxaloacetate. The sequence is that of Malate dehydrogenase 1 (mdh1) from Aquifex aeolicus (strain VF5).